The sequence spans 546 residues: Membrane protein insertase YidC (546 aa).

Residues 6-26 (LILFIVFSFSLLLLWEAWQDK) traverse the membrane as a helical segment. Residues 31 to 56 (PATRPVAGAPAGSAAPTPSTALNAPA) form a disordered region. Low complexity predominate over residues 37 to 56 (AGAPAGSAAPTPSTALNAPA). Transmembrane regions (helical) follow at residues 351–371 (LVGNWGWAIIILTILIKLALY), 425–445 (LPILIQIPVFIALYWVLLAAV), 465–482 (WYILPIIMGVTSILQVKL), and 494–514 (IMMIMPVAFTVMFVFFPAGLV).

This sequence belongs to the OXA1/ALB3/YidC family. Type 1 subfamily. As to quaternary structure, interacts with the Sec translocase complex via SecD. Specifically interacts with transmembrane segments of nascent integral membrane proteins during membrane integration.

Its subcellular location is the cell inner membrane. In terms of biological role, required for the insertion and/or proper folding and/or complex formation of integral membrane proteins into the membrane. Involved in integration of membrane proteins that insert both dependently and independently of the Sec translocase complex, as well as at least some lipoproteins. Aids folding of multispanning membrane proteins. The chain is Membrane protein insertase YidC from Thiobacillus denitrificans (strain ATCC 25259 / T1).